Consider the following 123-residue polypeptide: Small ribosomal subunit protein uS12 (123 aa).

The residue at position 89 (Asp-89) is a 3-methylthioaspartic acid.

The protein belongs to the universal ribosomal protein uS12 family. As to quaternary structure, part of the 30S ribosomal subunit. Contacts proteins S8 and S17. May interact with IF1 in the 30S initiation complex.

In terms of biological role, with S4 and S5 plays an important role in translational accuracy. Its function is as follows. Interacts with and stabilizes bases of the 16S rRNA that are involved in tRNA selection in the A site and with the mRNA backbone. Located at the interface of the 30S and 50S subunits, it traverses the body of the 30S subunit contacting proteins on the other side and probably holding the rRNA structure together. The combined cluster of proteins S8, S12 and S17 appears to hold together the shoulder and platform of the 30S subunit. The chain is Small ribosomal subunit protein uS12 from Nitrobacter winogradskyi (strain ATCC 25391 / DSM 10237 / CIP 104748 / NCIMB 11846 / Nb-255).